The sequence spans 363 residues: Succinyl-diaminopimelate desuccinylase (363 aa).

Histidine 63 lines the Zn(2+) pocket. The active site involves aspartate 65. Residue aspartate 94 coordinates Zn(2+). Residue glutamate 123 is the Proton acceptor of the active site. Residues glutamate 124, glutamate 152, and histidine 337 each coordinate Zn(2+).

This sequence belongs to the peptidase M20A family. DapE subfamily. In terms of assembly, homodimer. It depends on Zn(2+) as a cofactor. The cofactor is Co(2+).

The catalysed reaction is N-succinyl-(2S,6S)-2,6-diaminopimelate + H2O = (2S,6S)-2,6-diaminopimelate + succinate. It functions in the pathway amino-acid biosynthesis; L-lysine biosynthesis via DAP pathway; LL-2,6-diaminopimelate from (S)-tetrahydrodipicolinate (succinylase route): step 3/3. In terms of biological role, catalyzes the hydrolysis of N-succinyl-L,L-diaminopimelic acid (SDAP), forming succinate and LL-2,6-diaminopimelate (DAP), an intermediate involved in the bacterial biosynthesis of lysine and meso-diaminopimelic acid, an essential component of bacterial cell walls. The sequence is that of Succinyl-diaminopimelate desuccinylase from Campylobacter concisus (strain 13826).